The primary structure comprises 259 residues: Ribonuclease HII (259 aa).

An RNase H type-2 domain is found at 70–258; sequence TLIAGIDEVG…VKSLVLGKKE (189 aa). Asp76, Glu77, and Asp168 together coordinate a divalent metal cation.

This sequence belongs to the RNase HII family. Mn(2+) serves as cofactor. Mg(2+) is required as a cofactor.

It is found in the cytoplasm. The enzyme catalyses Endonucleolytic cleavage to 5'-phosphomonoester.. Endonuclease that specifically degrades the RNA of RNA-DNA hybrids. In Streptococcus pneumoniae (strain 70585), this protein is Ribonuclease HII.